Reading from the N-terminus, the 277-residue chain is MNWIEAALLGLVQGLTEFLPISSSAHLRIVGSFLPNAADPGAAFTAITQLGTETAVIVYFWRDIVRIVQAWFGSLTGKVERNNPDARMGWLVILGSLPIIVLGLLFQDQIESVLRSMWIVATMLIVFGMILAVADAVGRQERDLTQLSYKHGILYGFAQAMALIPGVSRSGGTITAGLLMGYTREAAARYSFLLAIPAVFGSGLYQLYKTVSNEGLAGPYGLPETALATVIAFVVGYVIIGWFLKFVSTRSYRLFVWYRILLGLALYVLLGFNVISA.

Helical transmembrane passes span 88 to 108 (MGWL…LFQD), 117 to 137 (MWIV…ADAV), 157 to 179 (FAQA…AGLL), 191 to 211 (SFLL…YKTV), 227 to 247 (LATV…LKFV), and 255 to 275 (FVWY…FNVI).

Belongs to the UppP family.

Its subcellular location is the cell membrane. The enzyme catalyses di-trans,octa-cis-undecaprenyl diphosphate + H2O = di-trans,octa-cis-undecaprenyl phosphate + phosphate + H(+). Catalyzes the dephosphorylation of undecaprenyl diphosphate (UPP). Confers resistance to bacitracin. This is Undecaprenyl-diphosphatase from Paenarthrobacter aurescens (strain TC1).